The following is a 1485-amino-acid chain: Chromosome partition protein MukB (1485 aa).

Position 34–41 (34–41 (GGNGAGKS)) interacts with ATP. Coiled coils occupy residues 337–480 (LNLV…QAYQ) and 509–605 (QHLA…PVWL). Positions 666–783 (PSGAEDARLI…EVPLFGRAAR (118 aa)) are flexible hinge. 2 coiled-coil regions span residues 835 to 915 (EAEI…IQQH) and 977 to 1116 (GMLT…AKAG).

The protein belongs to the SMC family. MukB subfamily. As to quaternary structure, homodimerization via its hinge domain. Binds to DNA via its C-terminal region. Interacts, and probably forms a ternary complex, with MukE and MukF via its C-terminal region. The complex formation is stimulated by calcium or magnesium. Interacts with tubulin-related protein FtsZ.

It is found in the cytoplasm. It localises to the nucleoid. In terms of biological role, plays a central role in chromosome condensation, segregation and cell cycle progression. Functions as a homodimer, which is essential for chromosome partition. Involved in negative DNA supercoiling in vivo, and by this means organize and compact chromosomes. May achieve or facilitate chromosome segregation by condensation DNA from both sides of a centrally located replisome during cell division. This is Chromosome partition protein MukB from Yersinia pseudotuberculosis serotype IB (strain PB1/+).